Reading from the N-terminus, the 332-residue chain is Biotin synthase (332 aa).

One can recognise a Radical SAM core domain in the interval 53 to 283 (WGKGGIHACS…VHPHSIIKFA (231 aa)). Residues Cys-71, Cys-75, and Cys-78 each contribute to the [4Fe-4S] cluster site. 3 residues coordinate [2Fe-2S] cluster: Cys-150, Cys-211, and Lys-281.

The protein belongs to the radical SAM superfamily. Biotin synthase family. In terms of assembly, homodimer. [4Fe-4S] cluster is required as a cofactor. [2Fe-2S] cluster serves as cofactor.

The catalysed reaction is (4R,5S)-dethiobiotin + (sulfur carrier)-SH + 2 reduced [2Fe-2S]-[ferredoxin] + 2 S-adenosyl-L-methionine = (sulfur carrier)-H + biotin + 2 5'-deoxyadenosine + 2 L-methionine + 2 oxidized [2Fe-2S]-[ferredoxin]. It functions in the pathway cofactor biosynthesis; biotin biosynthesis; biotin from 7,8-diaminononanoate: step 2/2. Functionally, catalyzes the conversion of dethiobiotin (DTB) to biotin by the insertion of a sulfur atom into dethiobiotin via a radical-based mechanism. In Chlorobium phaeovibrioides (strain DSM 265 / 1930) (Prosthecochloris vibrioformis (strain DSM 265)), this protein is Biotin synthase.